Consider the following 1132-residue polypeptide: Phytochrome B (1132 aa).

The segment covering 1 to 11 (MASGSRTKHSH) has biased composition (basic residues). The disordered stretch occupies residues 1–27 (MASGSRTKHSHQSGQGQVQAQSSGTSN). The span at 12 to 26 (QSGQGQVQAQSSGTS) shows a compositional bias: low complexity. Positions 231–409 (DVKLLCDTVV…AFGLQLNMEL (179 aa)) constitute a GAF domain. C336 contributes to the phytochromobilin binding site. PAS domains are found at residues 623–694 (VARE…LRGE) and 757–828 (DYKA…MIVL). Residues 905–1125 (YLCQEIKSPL…LIILDLPMTR (221 aa)) form the Histidine kinase domain.

It belongs to the phytochrome family. As to quaternary structure, homodimer. Contains one covalently linked phytochromobilin chromophore.

In terms of biological role, regulatory photoreceptor which exists in two forms that are reversibly interconvertible by light: the Pr form that absorbs maximally in the red region of the spectrum and the Pfr form that absorbs maximally in the far-red region. Photoconversion of Pr to Pfr induces an array of morphogenic responses, whereas reconversion of Pfr to Pr cancels the induction of those responses. Pfr controls the expression of a number of nuclear genes including those encoding the small subunit of ribulose-bisphosphate carboxylase, chlorophyll A/B binding protein, protochlorophyllide reductase, rRNA, etc. It also controls the expression of its own gene(s) in a negative feedback fashion. This chain is Phytochrome B (PHYB), found in Nicotiana tabacum (Common tobacco).